Reading from the N-terminus, the 497-residue chain is Probable cytosol aminopeptidase (497 aa).

Mn(2+) contacts are provided by Lys-267 and Asp-272. Lys-279 is an active-site residue. The Mn(2+) site is built by Asp-290, Asp-349, and Glu-351. Arg-353 is an active-site residue.

This sequence belongs to the peptidase M17 family. Requires Mn(2+) as cofactor.

It is found in the cytoplasm. It catalyses the reaction Release of an N-terminal amino acid, Xaa-|-Yaa-, in which Xaa is preferably Leu, but may be other amino acids including Pro although not Arg or Lys, and Yaa may be Pro. Amino acid amides and methyl esters are also readily hydrolyzed, but rates on arylamides are exceedingly low.. The enzyme catalyses Release of an N-terminal amino acid, preferentially leucine, but not glutamic or aspartic acids.. Functionally, presumably involved in the processing and regular turnover of intracellular proteins. Catalyzes the removal of unsubstituted N-terminal amino acids from various peptides. This is Probable cytosol aminopeptidase from Pseudomonas putida (strain ATCC 47054 / DSM 6125 / CFBP 8728 / NCIMB 11950 / KT2440).